A 97-amino-acid polypeptide reads, in one-letter code: Large ribosomal subunit protein uL23 (97 aa).

This sequence belongs to the universal ribosomal protein uL23 family. Part of the 50S ribosomal subunit. Contacts protein L29, and trigger factor when it is bound to the ribosome.

Functionally, one of the early assembly proteins it binds 23S rRNA. One of the proteins that surrounds the polypeptide exit tunnel on the outside of the ribosome. Forms the main docking site for trigger factor binding to the ribosome. The polypeptide is Large ribosomal subunit protein uL23 (Sinorhizobium medicae (strain WSM419) (Ensifer medicae)).